The chain runs to 566 residues: MISASRMEESASSSSLSDAAAPPPGAALQSIRSSCDRCRFHKLKCNVPAAGHGGPVPCERCTRAKVPCVFGRRRRANRPSEDKKRPAAPTRRATMPSPSPTPASTSAAHGGGDSATTGSADPPPPPPSTMDAALQRTPASHSDTGPAATYDGRSWETLMTGGLGDSPDILPGQHNSAGNGWEWFHQGFGLDDTSMFDADTLDPAIIWSPPTPQHIPTAALALATTELDMTTAPPATSGGTANMMRSSNTNTNSNSNSSSCWAPVQQLLPLIADMQQRLKMLEQGPWQGGDFPQSLDDYPVGAVLHLSREFGSIAGQVLSRAIAAGMVTGGGVPPVVRNHATDGGREFIVTNNPQKHLGSESSSSSSSSISNSSSNNEAGGDDGGVDTATALLVLGGYMWLMRIYGAALGHFQVHLSGLSGASESDGCGRGASRSGPNASPALRLGELPSTGTAPDLGRIHTALGMLQGALAEVEGQLGRGGAVARNLVVALLTRQEAVSRGVGGGGGGGGGGGGGGGGGVGGGGGGGGGPGGSSEHSGGSSDVDDCEGLGGKVQSVKELLREKMGF.

Residues methionine 1–serine 30 are compositionally biased toward low complexity. The segment at methionine 1–isoleucine 31 is disordered. Residues cysteine 35–cysteine 68 constitute a DNA-binding region (zn(2)-C6 fungal-type). Disordered stretches follow at residues arginine 72 to histidine 174, glutamate 346 to aspartate 382, serine 422 to alanine 453, and arginine 500 to glycine 551. Low complexity-rich tracts occupy residues proline 89 to alanine 108 and serine 359 to alanine 378. The span at glycine 501–glycine 532 shows a compositional bias: gly residues.

It is found in the nucleus. Functionally, transcription factor that regulates the expression of the gene cluster that mediates the biosynthesis of the tetramic acids Sch210971 and Sch210972, potential anti-HIV fungal natural product that contain a decalin core. In Hapsidospora irregularis, this protein is Transcription factor tasR.